The primary structure comprises 234 residues: Nuclear transcription factor Y subunit C-1 (234 aa).

Disordered stretches follow at residues 1-20 and 205-234; these read MDTNNQQPPPSAAGIPPPPP and SVWQTSTGTGDDVSYGSGGSSGQGNLDGQG. Residues 7 to 20 show a composition bias toward pro residues; it reads QPPPSAAGIPPPPP. Low complexity predominate over residues 209–219; sequence TSTGTGDDVSY. Residues 220-234 show a composition bias toward gly residues; the sequence is GSGGSSGQGNLDGQG.

This sequence belongs to the NFYC/HAP5 subunit family. Heterotrimeric transcription factor composed of three components, NF-YA, NF-YB and NF-YC. NF-YB and NF-YC must interact and dimerize for NF-YA association and DNA binding. As to expression, ubiquitous. Present in etiolated seedlings.

It localises to the nucleus. Functionally, stimulates the transcription of various genes by recognizing and binding to a CCAAT motif in promoters. The chain is Nuclear transcription factor Y subunit C-1 (NFYC1) from Arabidopsis thaliana (Mouse-ear cress).